The following is a 775-amino-acid chain: Dipeptidyl peptidase 4 (775 aa).

An N-terminal signal peptide occupies residues 1–15 (MKLLSLLMLAGIAQA). 4 N-linked (GlcNAc...) asparagine glycosylation sites follow: Asn81, Asn111, Asn170, and Asn219. Active-site charge relay system residues include Ser613, Asp690, and His725.

This sequence belongs to the peptidase S9B family.

It is found in the secreted. It carries out the reaction Release of an N-terminal dipeptide, Xaa-Yaa-|-Zaa-, from a polypeptide, preferentially when Yaa is Pro, provided Zaa is neither Pro nor hydroxyproline.. Extracellular dipeptidyl-peptidase which removes N-terminal dipeptides sequentially from polypeptides having unsubstituted N-termini provided that the penultimate residue is proline. Contributes to pathogenicity. The chain is Dipeptidyl peptidase 4 (DPP4) from Trichophyton tonsurans (Scalp ringworm fungus).